A 247-amino-acid chain; its full sequence is Large ribosomal subunit protein uL30 (247 aa).

The residue at position 1 (M1) is an N-acetylmethionine. A run of 4 repeats spans residues K7 to L17, K18 to I29, K30 to L41, and R42 to A53. The segment at K7–A53 is 4 X 12 AA tandem repeats. T16 is modified (phosphothreonine). Residue K123 is modified to N6-acetyllysine. K126 carries the post-translational modification N6-succinyllysine. Position 138 is a phosphotyrosine (Y138).

Belongs to the universal ribosomal protein uL30 family. In terms of assembly, component of the large ribosomal subunit. Homodimer. Interacts with DHX33.

It localises to the cytoplasm. Functionally, component of the large ribosomal subunit. The ribosome is a large ribonucleoprotein complex responsible for the synthesis of proteins in the cell. Binds to G-rich structures in 28S rRNA and in mRNAs. Plays a regulatory role in the translation apparatus; inhibits cell-free translation of mRNAs. The chain is Large ribosomal subunit protein uL30 (RPL7) from Pongo abelii (Sumatran orangutan).